A 143-amino-acid chain; its full sequence is Large ribosomal subunit protein uL11 (143 aa).

It belongs to the universal ribosomal protein uL11 family. In terms of assembly, part of the ribosomal stalk of the 50S ribosomal subunit. Interacts with L10 and the large rRNA to form the base of the stalk. L10 forms an elongated spine to which L12 dimers bind in a sequential fashion forming a multimeric L10(L12)X complex. One or more lysine residues are methylated.

Forms part of the ribosomal stalk which helps the ribosome interact with GTP-bound translation factors. This Phenylobacterium zucineum (strain HLK1) protein is Large ribosomal subunit protein uL11.